We begin with the raw amino-acid sequence, 398 residues long: 2-amino-3-ketobutyrate coenzyme A ligase (398 aa).

Residue Cys111 to Phe112 coordinates pyridoxal 5'-phosphate. Position 136 (His136) interacts with substrate. Residues Ser185, Asp210–His213, Thr241–Lys244, and Ser274–Asn275 each bind pyridoxal 5'-phosphate. At Lys244 the chain carries N6-(pyridoxal phosphate)lysine. Arg368 provides a ligand contact to substrate.

Belongs to the class-II pyridoxal-phosphate-dependent aminotransferase family. Homodimer. Pyridoxal 5'-phosphate is required as a cofactor.

The enzyme catalyses glycine + acetyl-CoA = (2S)-2-amino-3-oxobutanoate + CoA. It functions in the pathway amino-acid degradation; L-threonine degradation via oxydo-reductase pathway; glycine from L-threonine: step 2/2. In terms of biological role, catalyzes the cleavage of 2-amino-3-ketobutyrate to glycine and acetyl-CoA. The sequence is that of 2-amino-3-ketobutyrate coenzyme A ligase from Escherichia coli (strain K12).